Consider the following 594-residue polypeptide: Glutamate decarboxylase 1 (594 aa).

Positions 1–13 (MASSTPSSSATSS) are enriched in low complexity. Positions 1–25 (MASSTPSSSATSSNAGPDPNTTNLR) are disordered. A Phosphoserine modification is found at Ser-78. Residue 190 to 192 (QLS) coordinates 4-aminobutanoate. Lys-405 is subject to N6-(pyridoxal phosphate)lysine. 4-aminobutanoate is bound at residue Arg-567.

It belongs to the group II decarboxylase family. Homodimer. The cofactor is pyridoxal 5'-phosphate.

The enzyme catalyses L-glutamate + H(+) = 4-aminobutanoate + CO2. In terms of biological role, catalyzes the synthesis of the inhibitory neurotransmitter gamma-aminobutyric acid (GABA) with pyridoxal 5'-phosphate as cofactor. In Sus scrofa (Pig), this protein is Glutamate decarboxylase 1 (GAD1).